A 102-amino-acid polypeptide reads, in one-letter code: MKNEMKIKLFSYDHRLLDQSVRKIIKSSQDSGAKVKGPIPLPTKKEIFTICRSPHVNKTSREQFERRTHQRLIILLNTTEKTKEYLKNIIIPSGVDIQITLR.

The protein belongs to the universal ribosomal protein uS10 family. Part of the 30S ribosomal subunit.

Its function is as follows. Involved in the binding of tRNA to the ribosomes. The polypeptide is Small ribosomal subunit protein uS10 (Malacoplasma penetrans (strain HF-2) (Mycoplasma penetrans)).